Here is a 189-residue protein sequence, read N- to C-terminus: Putative manganese efflux pump MntP (189 aa).

A run of 6 helical transmembrane segments spans residues 3 to 23 (LSAT…ASIG), 41 to 61 (LIFG…GLFA), 65 to 85 (IMEW…CRMI), 104 to 124 (FWVL…IGVG), 132 to 152 (IVHT…LGML), and 167 to 187 (IIGG…HMHL).

This sequence belongs to the MntP (TC 9.B.29) family.

It localises to the cell inner membrane. Functionally, probably functions as a manganese efflux pump. The polypeptide is Putative manganese efflux pump MntP (Yersinia pseudotuberculosis serotype O:1b (strain IP 31758)).